Reading from the N-terminus, the 253-residue chain is Tryptophan synthase alpha chain (253 aa).

Active-site proton acceptor residues include glutamate 47 and aspartate 58.

The protein belongs to the TrpA family. As to quaternary structure, tetramer of two alpha and two beta chains.

It catalyses the reaction (1S,2R)-1-C-(indol-3-yl)glycerol 3-phosphate + L-serine = D-glyceraldehyde 3-phosphate + L-tryptophan + H2O. The protein operates within amino-acid biosynthesis; L-tryptophan biosynthesis; L-tryptophan from chorismate: step 5/5. In terms of biological role, the alpha subunit is responsible for the aldol cleavage of indoleglycerol phosphate to indole and glyceraldehyde 3-phosphate. The sequence is that of Tryptophan synthase alpha chain from Lactococcus lactis subsp. cremoris (strain SK11).